A 283-amino-acid polypeptide reads, in one-letter code: Pantothenate synthetase (283 aa).

Position 34–41 (Met-34–His-41) interacts with ATP. Residue His-41 is the Proton donor of the active site. Gln-65 contributes to the (R)-pantoate binding site. Gln-65 serves as a coordination point for beta-alanine. An ATP-binding site is contributed by Gly-152–Asp-155. Position 158 (Gln-158) interacts with (R)-pantoate. Position 189 to 192 (Met-189 to Arg-192) interacts with ATP.

The protein belongs to the pantothenate synthetase family. Homodimer.

It is found in the cytoplasm. It carries out the reaction (R)-pantoate + beta-alanine + ATP = (R)-pantothenate + AMP + diphosphate + H(+). Its pathway is cofactor biosynthesis; (R)-pantothenate biosynthesis; (R)-pantothenate from (R)-pantoate and beta-alanine: step 1/1. Catalyzes the condensation of pantoate with beta-alanine in an ATP-dependent reaction via a pantoyl-adenylate intermediate. The polypeptide is Pantothenate synthetase (Rhodopseudomonas palustris (strain BisA53)).